The sequence spans 501 residues: Probable cytosol aminopeptidase (501 aa).

Residues Lys268 and Asp273 each contribute to the Mn(2+) site. The active site involves Lys280. Residues Asp291, Asp350, and Glu352 each coordinate Mn(2+). The active site involves Arg354.

It belongs to the peptidase M17 family. Mn(2+) serves as cofactor.

Its subcellular location is the cytoplasm. It catalyses the reaction Release of an N-terminal amino acid, Xaa-|-Yaa-, in which Xaa is preferably Leu, but may be other amino acids including Pro although not Arg or Lys, and Yaa may be Pro. Amino acid amides and methyl esters are also readily hydrolyzed, but rates on arylamides are exceedingly low.. The enzyme catalyses Release of an N-terminal amino acid, preferentially leucine, but not glutamic or aspartic acids.. In terms of biological role, presumably involved in the processing and regular turnover of intracellular proteins. Catalyzes the removal of unsubstituted N-terminal amino acids from various peptides. The chain is Probable cytosol aminopeptidase from Colwellia psychrerythraea (strain 34H / ATCC BAA-681) (Vibrio psychroerythus).